The primary structure comprises 564 residues: R-linalool synthase (564 aa).

Residues D320, D324, D464, T468, and E472 each contribute to the Mg(2+) site. Residues 320-324 (DDVYD) carry the DDXXD motif motif.

It belongs to the terpene synthase family. The cofactor is Mg(2+). Requires Mn(2+) as cofactor.

It carries out the reaction (2E)-geranyl diphosphate + H2O = (R)-linalool + diphosphate. Its function is as follows. Specifically catalyzes production of (R)-(-)-linalool, the main component of lavender essential oil. The chain is R-linalool synthase from Lavandula angustifolia (Lavender).